Here is a 316-residue protein sequence, read N- to C-terminus: Lipoyl synthase (316 aa).

Residues C61, C66, C72, C87, C91, C94, and S301 each coordinate [4Fe-4S] cluster. Residues 73–290 (FGKGTATFMI…ERAAIEMGFS (218 aa)) form the Radical SAM core domain.

This sequence belongs to the radical SAM superfamily. Lipoyl synthase family. [4Fe-4S] cluster is required as a cofactor.

Its subcellular location is the cytoplasm. The enzyme catalyses [[Fe-S] cluster scaffold protein carrying a second [4Fe-4S](2+) cluster] + N(6)-octanoyl-L-lysyl-[protein] + 2 oxidized [2Fe-2S]-[ferredoxin] + 2 S-adenosyl-L-methionine + 4 H(+) = [[Fe-S] cluster scaffold protein] + N(6)-[(R)-dihydrolipoyl]-L-lysyl-[protein] + 4 Fe(3+) + 2 hydrogen sulfide + 2 5'-deoxyadenosine + 2 L-methionine + 2 reduced [2Fe-2S]-[ferredoxin]. Its pathway is protein modification; protein lipoylation via endogenous pathway; protein N(6)-(lipoyl)lysine from octanoyl-[acyl-carrier-protein]: step 2/2. In terms of biological role, catalyzes the radical-mediated insertion of two sulfur atoms into the C-6 and C-8 positions of the octanoyl moiety bound to the lipoyl domains of lipoate-dependent enzymes, thereby converting the octanoylated domains into lipoylated derivatives. The protein is Lipoyl synthase of Nitrosospira multiformis (strain ATCC 25196 / NCIMB 11849 / C 71).